An 871-amino-acid polypeptide reads, in one-letter code: Probable receptor-like protein kinase At2g21480 (871 aa).

Residues Met1–Ala39 form the signal peptide. Residues Val40–Gly439 are Extracellular-facing. N-linked (GlcNAc...) asparagine glycans are attached at residues Asn169, Asn182, Asn253, Asn316, and Asn381. A helical membrane pass occupies residues Met440–Val460. Residues Tyr461–Arg871 lie on the Cytoplasmic side of the membrane. Positions Phe525–Ala797 constitute a Protein kinase domain. Residues Ile531–Val539 and Lys553 each bind ATP. Asp649 serves as the catalytic Proton acceptor. The disordered stretch occupies residues Lys808–Arg871. A compositionally biased stretch (low complexity) spans Pro817 to Glu839. Residues Asp854–Arg871 are compositionally biased toward polar residues.

Belongs to the protein kinase superfamily. Ser/Thr protein kinase family.

It localises to the membrane. This is Probable receptor-like protein kinase At2g21480 from Arabidopsis thaliana (Mouse-ear cress).